Here is a 536-residue protein sequence, read N- to C-terminus: Xylulose kinase (536 aa).

The substrate site is built by H99, R170, D280, and N281. ATP contacts are provided by residues W355, 441 to 442 (GA), and N445.

This sequence belongs to the FGGY kinase family. As to quaternary structure, monomer.

The enzyme catalyses D-xylulose + ATP = D-xylulose 5-phosphate + ADP + H(+). Its function is as follows. Phosphorylates D-xylulose to produce D-xylulose 5-phosphate, a molecule that may play an important role in the regulation of glucose metabolism and lipogenesis. In Homo sapiens (Human), this protein is Xylulose kinase (XYLB).